Reading from the N-terminus, the 148-residue chain is Ribonuclease H (148 aa).

The RNase H type-1 domain maps to 2 to 143 (TADIIYIYSD…ADVLANQGVL (142 aa)). Mg(2+) contacts are provided by Asp-11, Glu-49, Asp-71, and Asp-135.

The protein belongs to the RNase H family. As to quaternary structure, monomer. Mg(2+) is required as a cofactor.

It is found in the cytoplasm. It catalyses the reaction Endonucleolytic cleavage to 5'-phosphomonoester.. In terms of biological role, endonuclease that specifically degrades the RNA of RNA-DNA hybrids. The chain is Ribonuclease H from Thiobacillus denitrificans (strain ATCC 25259 / T1).